The primary structure comprises 295 residues: ATP synthase gamma chain (295 aa).

The protein belongs to the ATPase gamma chain family. As to quaternary structure, F-type ATPases have 2 components, CF(1) - the catalytic core - and CF(0) - the membrane proton channel. CF(1) has five subunits: alpha(3), beta(3), gamma(1), delta(1), epsilon(1). CF(0) has three main subunits: a, b and c.

The protein localises to the cell inner membrane. Its function is as follows. Produces ATP from ADP in the presence of a proton gradient across the membrane. The gamma chain is believed to be important in regulating ATPase activity and the flow of protons through the CF(0) complex. This chain is ATP synthase gamma chain, found in Campylobacter concisus (strain 13826).